The following is a 23-amino-acid chain: Pseudin-3 (23 aa).

Expressed by the skin glands.

The protein resides in the secreted. Possesses antifungal activity against C.albicans and is also active against E.coli and S.aureus. In Pseudis paradoxa (Paradoxical frog), this protein is Pseudin-3.